The primary structure comprises 554 residues: HMG box-containing protein 4 (554 aa).

Disordered stretches follow at residues 15-368 and 417-469; these read GTED…AYQV and HKQN…PAKV. Basic and acidic residues predominate over residues 75–88; sequence SSDDYHADHSTDSA. Residues 95-105 are compositionally biased toward low complexity; sequence SLPSPSSSDTA. Residues 113–123 show a composition bias toward polar residues; the sequence is TSPQADTSTTH. Basic and acidic residues-rich tracts occupy residues 145–154 and 217–226; these read PHKDYHKKSG and LGREEIESRS. The segment covering 236–251 has biased composition (polar residues); the sequence is YTPRSGGTPDSASSTG. Residues 268-296 are compositionally biased toward basic residues; sequence MKKKKKSKKSKKKKDKHKDEKHKKHSKSK. The span at 313 to 332 shows a compositional bias: pro residues; it reads LPSPPPPPATTPPTSPPSIP. The segment covering 341 to 357 has biased composition (basic and acidic residues); the sequence is HTEEQSDKKKKKEDPEK. A DNA-binding region (HMG box) is located at residues 359-427; it reads KKKNMSAYQV…KQNKAEATTV (69 aa). Composition is skewed to low complexity over residues 433–445 and 454–467; these read SSES…GSSS and SPTS…TSPA.

In terms of assembly, interacts with nlk.2.

The protein localises to the nucleus. Functionally, negatively regulates Wnt/beta-catenin signaling during development. This Xenopus laevis (African clawed frog) protein is HMG box-containing protein 4 (hmgxb4).